A 51-amino-acid polypeptide reads, in one-letter code: Ovomucoid (51 aa).

Residues 3 to 51 enclose the Kazal-like domain; sequence VDCSGYPKPACTLEYFPLCGSDNQTYANKCAFCNAVVEKNVTLRHLGKC. 3 cysteine pairs are disulfide-bonded: Cys-5/Cys-35, Cys-13/Cys-32, and Cys-21/Cys-51. Asn-42 is a glycosylation site (N-linked (GlcNAc...) asparagine).

It localises to the secreted. The chain is Ovomucoid from Nothoprocta cinerascens (Brushland tinamou).